The following is an 852-amino-acid chain: Serine/threonine-protein kinase pakB (852 aa).

Positions 1–334 (MEQSKRVSMM…NVGNKQDEEK (334 aa)) are disordered. At Ser8 the chain carries Phosphoserine; by autocatalysis. A compositionally biased stretch (pro residues) spans 24–35 (SPPPNRKPPPPN). Residues 44 to 56 (SSLNSSGSSFVSP) show a composition bias toward low complexity. Pro residues predominate over residues 57 to 74 (SPSPSPSPQQPVKRPLPS). Low complexity-rich tracts occupy residues 90 to 117 (RPQQ…NSNG) and 124 to 163 (FSSS…GSSN). The segment covering 181–191 (TPPPPPQPTPS) has biased composition (pro residues). The span at 201 to 210 (ASHNNTQHNI) shows a compositional bias: polar residues. 2 stretches are compositionally biased toward low complexity: residues 246–270 (SPGS…STPI) and 293–317 (SNSN…ATTS). The CRIB domain occupies 356 to 369 (VGSPFNVKHNIHVN). The span at 419–433 (AQQEQQALMQKQMQQ) shows a compositional bias: low complexity. The segment at 419–526 (AQQEQQALMQ…GILSQQQEQQ (108 aa)) is disordered. A compositionally biased stretch (basic residues) spans 470 to 485 (PQHHHQQQPPQQHHHQ). Over residues 486-514 (QQQQQHNNNNNNNNNNNNNNNNQQSAQQQ) the composition is skewed to low complexity. A Protein kinase domain is found at 570–823 (GEGSTKIGEG…AKVLLNHPFL (254 aa)). ATP contacts are provided by residues 576 to 584 (IGEGAAGEV) and Lys599. Asp691 (proton acceptor) is an active-site residue.

The protein belongs to the protein kinase superfamily. STE Ser/Thr protein kinase family. STE20 subfamily. As to quaternary structure, interacts with rac1A, rac1B, rac1C, racA, racB, racC and racF1. Requires Mg(2+) as cofactor. Autophosphorylated at Ser-8. This may stimulate interaction with GTP-bound Rac family members which then further stimulates autophosphorylation and kinase activity.

The protein localises to the membrane. It localises to the cytoplasm. It is found in the cytoskeleton. It carries out the reaction L-seryl-[protein] + ATP = O-phospho-L-seryl-[protein] + ADP + H(+). The enzyme catalyses L-threonyl-[protein] + ATP = O-phospho-L-threonyl-[protein] + ADP + H(+). Its function is as follows. Regulator of the myosin I component of the cytoskeleton: required for regulation of cytokinesis, phagocytosis and pinocytosis. The sequence is that of Serine/threonine-protein kinase pakB from Dictyostelium discoideum (Social amoeba).